The sequence spans 414 residues: Succinylornithine transaminase (414 aa).

Residue K260 is modified to N6-(pyridoxal phosphate)lysine.

It belongs to the class-III pyridoxal-phosphate-dependent aminotransferase family. AstC subfamily. The cofactor is pyridoxal 5'-phosphate.

It carries out the reaction N(2)-succinyl-L-ornithine + 2-oxoglutarate = N-succinyl-L-glutamate 5-semialdehyde + L-glutamate. The protein operates within amino-acid degradation; L-arginine degradation via AST pathway; L-glutamate and succinate from L-arginine: step 3/5. Functionally, catalyzes the transamination of N(2)-succinylornithine and alpha-ketoglutarate into N(2)-succinylglutamate semialdehyde and glutamate. Can also act as an acetylornithine aminotransferase. This Yersinia enterocolitica serotype O:8 / biotype 1B (strain NCTC 13174 / 8081) protein is Succinylornithine transaminase.